The following is a 290-amino-acid chain: Serine protease 27 (290 aa).

The N-terminal stretch at 1–22 is a signal peptide; that stretch reads MRRPAAVPLLLLLCFGSQRAKA. Positions 23 to 34 are cleaved as a propeptide — activation peptide; it reads ATACGRPRMLNR. Residues 35-277 enclose the Peptidase S1 domain; the sequence is MVGGQDTQEG…HHNWIHRIIP (243 aa). Residue Asn55 is glycosylated (N-linked (GlcNAc...) asparagine). A disulfide bond links Cys60 and Cys76. His75 serves as the catalytic Charge relay system. N-linked (GlcNAc...) asparagine glycosylation occurs at Asn79. Asp124 (charge relay system) is an active-site residue. 3 disulfides stabilise this stretch: Cys158–Cys235, Cys191–Cys214, and Cys225–Cys253. Ser229 functions as the Charge relay system in the catalytic mechanism.

Belongs to the peptidase S1 family. N-glycosylated. Expressed predominantly in the pancreas.

It is found in the secreted. The sequence is that of Serine protease 27 (PRSS27) from Homo sapiens (Human).